The sequence spans 413 residues: MKPICIIPARSGSKGLPDKNMLFLAGKPMIFHTIDAAIESGMFDKKDIFVSTDSELYREICLERGISVVMRKPELSTDQATSYDMLKDFLSDYEDNQEFVLLQVTSPLRKSWHIKEAMEYYSSHDVDNVVSFSEVEKHPGLFTTLSDKGYAIDMVGADKGYRRQDLQPLYYPNGAIFISNKETYLREKSFFTSRTYAYQMAKEFSLDVDTRDDFIHVIGHLFFDYAIREKENKVFYKEGYSRLFNREASKIILGDSKTISISLENYHNYSQGGVTLATMLENLPNFLTANVTEAFVSIGVNDLITGYSVEEIFSNFQKLYSLLAENKIKMRFTTIAYTLFRETVNNADIEKINQWLTEFCYQNQIPLLDINRFLSKDGNLNYHLTSDGLHFTQEANDLLQSQYQLFVDEVKTL.

It belongs to the CMP-NeuNAc synthase family. The cofactor is Mg(2+). Mn(2+) is required as a cofactor.

The protein localises to the cytoplasm. It carries out the reaction an N-acylneuraminate + CTP = a CMP-N-acyl-beta-neuraminate + diphosphate. Catalyzes the formation of CMP-N-acetylneuraminic acid (CMP-NeuNAc), which is essential for the formation of the capsule. This is N-acylneuraminate cytidylyltransferase (neuA) from Streptococcus agalactiae serotype Ia (strain ATCC 27591 / A909 / CDC SS700).